Reading from the N-terminus, the 80-residue chain is Protein Vpu (80 aa).

The Extracellular segment spans residues 1–7; the sequence is MLSLQIL. The helical transmembrane segment at 8–28 threads the bilayer; sequence AIVALVVAAIIAIVVWSIVFI. Residues 29–80 lie on the Cytoplasmic side of the membrane; it reads EYRKILRQRKIDRLIDRIREREEDSGNESEGDQEELAALERGHLAPWDVDDL. The tract at residues 49–80 is disordered; that stretch reads REEDSGNESEGDQEELAALERGHLAPWDVDDL. Phosphoserine; by host CK2 occurs at positions 53 and 57. The span at 53–65 shows a compositional bias: acidic residues; the sequence is SGNESEGDQEELA.

Belongs to the HIV-1 VPU protein family. As to quaternary structure, homopentamer. Interacts with host CD4 and BRTC; these interactions induce proteasomal degradation of CD4. Interacts with host BST2; this interaction leads to the degradation of host BST2. Interacts with host FBXW11. Interacts with host AP1M1; this interaction plays a role in the mistrafficking and subsequent degradation of host BST2. Interacts with host RANBP2; this interaction allows Vpu to down-regulate host BLM sumoylation. Post-translationally, phosphorylated by host CK2. This phosphorylation is necessary for interaction with human BTRC and degradation of CD4.

The protein resides in the host membrane. Its activity is regulated as follows. Ion channel activity is inhibited by hexamethylene amiloride in vitro. Its function is as follows. Enhances virion budding by targeting host CD4 and Tetherin/BST2 to proteasome degradation. Degradation of CD4 prevents any unwanted premature interactions between viral Env and its host receptor CD4 in the endoplasmic reticulum. Degradation of antiretroviral protein Tetherin/BST2 is important for virion budding, as BST2 tethers new viral particles to the host cell membrane. Mechanistically, Vpu bridges either CD4 or BST2 to BTRC, a substrate recognition subunit of the Skp1/Cullin/F-box protein E3 ubiquitin ligase, induces their ubiquitination and subsequent proteasomal degradation. The alteration of the E3 ligase specificity by Vpu seems to promote the degradation of host IKBKB, leading to NF-kappa-B down-regulation and subsequent apoptosis. Acts as a viroporin that forms an oligomeric ion channel in membranes. Modulates the host DNA repair mechanisms to promote degradation of nuclear viral cDNA in cells that are already productively infected in order to suppress immune sensing and proviral hyper-integration (superinfection). Manipulates PML-NBs and modulates SUMOylation of host BLM protein thereby enhancing its DNA-end processing activity toward viral unintegrated linear DNA. Also inhibits RAD52-mediated homologous repair of viral cDNA, preventing the generation of dead-end circular forms of single copies of the long terminal repeat and permitting sustained nucleolytic attack. In Human immunodeficiency virus type 1 group M subtype B (strain 89.6) (HIV-1), this protein is Protein Vpu.